Consider the following 624-residue polypeptide: MSSGVQGGSAANANAYQTHPLRDAASALGTLSPQAYVDVVSAAQRNFLERMSRLASEQCDAQPVTDDARLDRLDDKPALRAPRSDAAHAADGNARGNGGASGAAKLTELLGVLMSVISASSLDELRQRSDIWNQMSKAAQDNLTSLSDKFQCATDDAKAATDAAERAAAAAKQAAADAKAADAAADAAQKRYDDAMKQGLPDDQLKTLQAALEQAKQQAGDAHARADALQADAAGKLDAATALATQAREWEQQIDDAVNQASRQYGASASLRTPPSPKLSGAAELTAVLGKLQELISSGNVKELESKQKLFTEMQAKREAELQKKSDEYQEQVKKAEEMQKTMGCIGKIVGWVITAVSFAAAAFTGGASLALAAVGLALAVGDEISRATTGVSFMDKLMQPVMDAILKPLMEVISSLITKALVACGVDQQKAELAGAILGAVVTGVALVAAAFVGASAVKAVASKVIDAVAGQLTKLMDSAIGKMLVQLIEKFSEKSGLQALGSRTATAMTRMRRAIGVEAKEDGMLLANRFEKAGTVMNVGNQVSQAAGGIVVGVERAKAMGLLADVKEAMYDIKLLGDLLKQAVESFAEHNRALAQLMQQMSDAGEMQTATGKLILRNARAV.

Residues 54-99 are disordered; it reads LASEQCDAQPVTDDARLDRLDDKPALRAPRSDAAHAADGNARGNGG. Basic and acidic residues predominate over residues 66 to 88; that stretch reads DDARLDRLDDKPALRAPRSDAAH. Positions 313 to 343 form a coiled coil; it reads EMQAKREAELQKKSDEYQEQVKKAEEMQKTM. Transmembrane regions (helical) follow at residues 359-379, 405-425, and 434-454; these read FAAA…GLAL, AILK…LVAC, and LAGA…AAFV.

Belongs to the SctE/SipB/YopB family.

The protein localises to the secreted. It localises to the host membrane. Its function is as follows. Plays a role in the bacterium-induced formation of multinucleated giant cell (MNGC), which is formed after host cell fusion, as well as in the intercellular spreading of bacteria and in the induction of apoptosis in macrophages. May act in concert with other effector proteins to induce fusion of host cell membranes. The chain is Translocator protein BipB (bipB) from Burkholderia thailandensis (strain ATCC 700388 / DSM 13276 / CCUG 48851 / CIP 106301 / E264).